Consider the following 427-residue polypeptide: Adenylosuccinate synthetase (427 aa).

Residues 12 to 18 and 40 to 42 contribute to the GTP site; these read GDEGKGK and GHT. D13 serves as the catalytic Proton acceptor. 2 residues coordinate Mg(2+): D13 and G40. Residues 13-16, 38-41, T131, R145, Q226, T241, and R305 contribute to the IMP site; these read DEGK and NAGH. The active-site Proton donor is the H41. 301–307 is a binding site for substrate; it reads ATTGRKR. Residues R307, 333–335, and 415–417 each bind GTP; these read KLD and SVG.

Belongs to the adenylosuccinate synthetase family. Homodimer. Mg(2+) is required as a cofactor.

It is found in the cytoplasm. It catalyses the reaction IMP + L-aspartate + GTP = N(6)-(1,2-dicarboxyethyl)-AMP + GDP + phosphate + 2 H(+). It functions in the pathway purine metabolism; AMP biosynthesis via de novo pathway; AMP from IMP: step 1/2. In terms of biological role, plays an important role in the de novo pathway of purine nucleotide biosynthesis. Catalyzes the first committed step in the biosynthesis of AMP from IMP. The polypeptide is Adenylosuccinate synthetase (Oleidesulfovibrio alaskensis (strain ATCC BAA-1058 / DSM 17464 / G20) (Desulfovibrio alaskensis)).